We begin with the raw amino-acid sequence, 1651 residues long: Vitellogenin-6 (1651 aa).

The signal sequence occupies residues 1-15 (MKFFIALALLGAALA). Positions 34 to 716 (FRAGREYRYL…TTESVLPTEM (683 aa)) constitute a Vitellogenin domain. N-linked (GlcNAc...) asparagine glycans are attached at residues Asn-252 and Asn-1288. The VWFD domain occupies 1340 to 1515 (ANCVVKSTKI…SYLYKDSKCN (176 aa)). Intrachain disulfides connect Cys-1342–Cys-1479 and Cys-1364–Cys-1514. Residues 1527 to 1556 (FQRIEKNQEEEKDQEMNYEESRREQDDEPT) form a disordered region.

As to expression, synthesized in Caenorhabditis only by 32 cells building the intestine of adult hermaphroditic individuals; they are cotranslationally secreted into the body cavity and subsequently taken up by the gonad.

The protein localises to the secreted. Its function is as follows. Precursor of the egg-yolk proteins that are sources of nutrients during embryonic development. May play a role in cholesterol uptake. May be involved in thermotolerance. The chain is Vitellogenin-6 (vit-6) from Caenorhabditis elegans.